The sequence spans 309 residues: Glutaminase (309 aa).

Ser64, Asn114, Glu160, Asn167, Tyr191, Tyr243, and Val261 together coordinate substrate.

Belongs to the glutaminase family. Homotetramer.

The catalysed reaction is L-glutamine + H2O = L-glutamate + NH4(+). In Rhizobium johnstonii (strain DSM 114642 / LMG 32736 / 3841) (Rhizobium leguminosarum bv. viciae), this protein is Glutaminase.